A 308-amino-acid polypeptide reads, in one-letter code: Cell division protein FtsX (308 aa).

The Cytoplasmic segment spans residues 1 to 24; the sequence is MISRFFRHLFEALKSLKRNGWMTV. Residues 25–45 form a helical membrane-spanning segment; that stretch reads AAVSSVMITLTLVAIFASVIF. Topologically, residues 46–178 are extracellular; sequence NTAKLATDIE…NTERLFKLAS (133 aa). A helical transmembrane segment spans residues 179–199; the sequence is FIRVWGLGIAALLIFIAVFLI. At 200–236 the chain is on the cytoplasmic side; sequence SNTIRITIISRSREIQIMRLVGAKNSYIRGPFLLEGA. Residues 237-257 form a helical membrane-spanning segment; that stretch reads FIGLLGAIAPSVLVFIVYQIV. Residues 258–276 lie on the Extracellular side of the membrane; that stretch reads YQSVNKSLVGQNLSMISPD. The helical transmembrane segment at 277–297 threads the bilayer; it reads LFSPLMIALLFVIGVFIGSLG. The Cytoplasmic segment spans residues 298-308; sequence SGISMRRFLKI.

Belongs to the ABC-4 integral membrane protein family. FtsX subfamily. As to quaternary structure, homodimer. Interacts with FtsE; forms a membrane-associated complex. Interacts (via large extracellular loop) with PcsB (via N-terminal coiled-coil domain). This interaction directs PcsB to equatorial and septal sites of dividing cells.

The protein localises to the cell membrane. In terms of biological role, part of the ABC transporter FtsEX involved in asymmetric cellular division facilitating the initiation of sporulation. Required in maintaining normal growth and cellular morphology. This chain is Cell division protein FtsX, found in Streptococcus pneumoniae serotype 2 (strain D39 / NCTC 7466).